Consider the following 218-residue polypeptide: Pyrrolidone-carboxylate peptidase 2 (218 aa).

Catalysis depends on residues glutamate 83, cysteine 146, and histidine 170.

It belongs to the peptidase C15 family. As to quaternary structure, homotetramer.

It localises to the cytoplasm. It catalyses the reaction Release of an N-terminal pyroglutamyl group from a polypeptide, the second amino acid generally not being Pro.. Its function is as follows. Removes 5-oxoproline from various penultimate amino acid residues except L-proline. In Photorhabdus laumondii subsp. laumondii (strain DSM 15139 / CIP 105565 / TT01) (Photorhabdus luminescens subsp. laumondii), this protein is Pyrrolidone-carboxylate peptidase 2.